The primary structure comprises 154 residues: Transcriptional repressor NrdR (154 aa).

Residues 3-34 fold into a zinc finger; that stretch reads CPFCGHSNTQVLDTRMSEDGDAVRRRRRCEAC. In terms of domain architecture, ATP-cone spans 49–139; it reads PAIVKKNGSR…VYRSFEDVAE (91 aa).

This sequence belongs to the NrdR family. Zn(2+) serves as cofactor.

Functionally, negatively regulates transcription of bacterial ribonucleotide reductase nrd genes and operons by binding to NrdR-boxes. The chain is Transcriptional repressor NrdR from Cupriavidus pinatubonensis (strain JMP 134 / LMG 1197) (Cupriavidus necator (strain JMP 134)).